Consider the following 300-residue polypeptide: MALRTDWNGVFPAMVTPFRENGSFDEASFKALIELYISEGVKGVVVTGSTGEWYSMSDAERATVWEVAVEASSGRITVIAGTSAVGTREALALTRTAKAVGVDGCMLLPPGGIFAARNEVVNYFHTLAGVGLPIMVYNNPPRTGVNMDADMVAEIAKSEEIVSFKDINRYLYAASEIIYRVCDKLAVFTGLEPYASSVLPRGAVGVVSTISNICAANMVSYYNAVISGDSATAYKTQKLIDQLYHFLPTLGAPAFVSVKAAMKLLGRPGGEIRLPHLPANEALIGKLREELRRLKMMTLN.

The active-site Charge relay system is the Ser49. The Proton donor role is filled by Tyr137. The active-site Schiff-base intermediate with substrate is the Lys165.

The protein belongs to the DapA family. As to quaternary structure, homotetramer.

The protein localises to the cytoplasm. Upon expression in E.coli complements a dapA deletion mutation, but this may not be its physiological function. This is an uncharacterized protein from Rhizobium meliloti (Ensifer meliloti).